Reading from the N-terminus, the 873-residue chain is DNA mismatch repair protein MutS (873 aa).

Residue 628–635 coordinates ATP; it reads GPNMAGKS.

Belongs to the DNA mismatch repair MutS family.

Its function is as follows. This protein is involved in the repair of mismatches in DNA. It is possible that it carries out the mismatch recognition step. This protein has a weak ATPase activity. The protein is DNA mismatch repair protein MutS of Chlorobium chlorochromatii (strain CaD3).